Reading from the N-terminus, the 312-residue chain is Serine/threonine-protein phosphatase PP1 isozyme 2 (312 aa).

Position 2 is an N-acetylalanine (Ala-2). Residues Asp-70, His-72, Asp-98, and Asn-130 each coordinate Mn(2+). Catalysis depends on His-131, which acts as the Proton donor. Mn(2+) contacts are provided by His-179 and His-254.

The protein belongs to the PPP phosphatase family. PP-1 subfamily. As to quaternary structure, interacts with SRK2D/SNRK2.2 and SRK2E/SNRK2.6. It depends on Mn(2+) as a cofactor.

The protein localises to the nucleus. The protein resides in the cytoplasm. It carries out the reaction O-phospho-L-seryl-[protein] + H2O = L-seryl-[protein] + phosphate. The enzyme catalyses O-phospho-L-threonyl-[protein] + H2O = L-threonyl-[protein] + phosphate. With respect to regulation, phosphatase activity is strongly reduced by the protein phosphatase inhibitor 2 (I-2). Serine/threonine-protein phosphatase that possesses phosphatase activity toward para-nitrophenyl phosphate (pNPP) in vitro. The chain is Serine/threonine-protein phosphatase PP1 isozyme 2 from Arabidopsis thaliana (Mouse-ear cress).